The chain runs to 71 residues: Exodeoxyribonuclease 7 small subunit (71 aa).

This sequence belongs to the XseB family. As to quaternary structure, heterooligomer composed of large and small subunits.

It is found in the cytoplasm. The enzyme catalyses Exonucleolytic cleavage in either 5'- to 3'- or 3'- to 5'-direction to yield nucleoside 5'-phosphates.. Bidirectionally degrades single-stranded DNA into large acid-insoluble oligonucleotides, which are then degraded further into small acid-soluble oligonucleotides. In Streptococcus pyogenes serotype M1, this protein is Exodeoxyribonuclease 7 small subunit.